A 131-amino-acid polypeptide reads, in one-letter code: Peptide methionine sulfoxide reductase MsrB (131 aa).

The region spanning 8–130 is the MsrB domain; it reads LEEWRAMLDP…NSVCLDLVPR (123 aa). Residues Cys47, Cys50, Cys96, and Cys99 each coordinate Zn(2+). Cys119 acts as the Nucleophile in catalysis.

Belongs to the MsrB Met sulfoxide reductase family. The cofactor is Zn(2+).

The enzyme catalyses L-methionyl-[protein] + [thioredoxin]-disulfide + H2O = L-methionyl-(R)-S-oxide-[protein] + [thioredoxin]-dithiol. This Pseudomonas fluorescens (strain Pf0-1) protein is Peptide methionine sulfoxide reductase MsrB.